Reading from the N-terminus, the 437-residue chain is ATP-dependent RNA helicase RhlB (437 aa).

The short motif at 9-37 (QKFADLGLEPTVLEGLDAQGFHYCTPIQA) is the Q motif element. The Helicase ATP-binding domain occupies 40–219 (LPVVLTGQDI…FEHMNSPESV (180 aa)). 53–60 (AQTGTGKT) contacts ATP. Residues 165–168 (DEAD) carry the DEAD box motif. A Helicase C-terminal domain is found at 245 to 390 (RLLQTLIEEE…LSKYNSEALL (146 aa)). The interval 395 to 437 (APLRLQRTPRQGGNRRPNGNRQGQGQSRPRNNNRRHPQSQKQQ) is disordered. The span at 400 to 424 (QRTPRQGGNRRPNGNRQGQGQSRPR) shows a compositional bias: low complexity. A compositionally biased stretch (basic residues) spans 425–437 (NNNRRHPQSQKQQ).

This sequence belongs to the DEAD box helicase family. RhlB subfamily. As to quaternary structure, component of the RNA degradosome, which is a multiprotein complex involved in RNA processing and mRNA degradation.

It is found in the cytoplasm. The enzyme catalyses ATP + H2O = ADP + phosphate + H(+). Its function is as follows. DEAD-box RNA helicase involved in RNA degradation. Has RNA-dependent ATPase activity and unwinds double-stranded RNA. This is ATP-dependent RNA helicase RhlB from Photobacterium profundum (strain SS9).